Here is a 121-residue protein sequence, read N- to C-terminus: Protein GAT4 (121 aa).

Residues 29-48 are disordered; it reads EAQHGLPRNADSQPARPRTG. The segment at 53–79 adopts a GATA-type zinc-finger fold; the sequence is CGQCGEIKTSLQWREGPNGAACLCNAC.

This is Protein GAT4 (GAT4) from Saccharomyces cerevisiae (strain ATCC 204508 / S288c) (Baker's yeast).